The primary structure comprises 260 residues: GDNF family receptor alpha-4 (260 aa).

The first 23 residues, 1-23 (MAHCMESALLLLLLLGSASFTDG), serve as a signal peptide directing secretion. N-linked (GlcNAc...) asparagine glycosylation is present at asparagine 184. A lipid anchor (GPI-anchor amidated threonine) is attached at threonine 237. A propeptide spans 238–260 (AGCCFPRVSWLYALTALALQALL) (removed in mature form).

The protein belongs to the GDNFR family. As to quaternary structure, interacts with ARTN ligand and RET: forms a 2:2:2 ternary complex composed of ARTN ligand, GFRA3 and RET receptor. Interacts with SORL1. Expressed in many tissues including adrenal medulla, brain neurons, with highest levels in the cerebral cortex and hippocampus. Moderate levels found in the gut circular muscle and myenteric ganglia as well as in other peripheral ganglia, including the sensory dorsal root and trigeminal as well as superior cervical and sympathetic chain ganglia. Isoform a1, isoform a2, isoform b1 and isoform b2 are exclusively found in the thyroid, parthyroid and pituitary glands.

It localises to the cell membrane. The protein resides in the secreted. Receptor for persephin (PSPN), a growth factor that exhibits neurotrophic activity on mesencephalic dopaminergic and motor neurons. Acts by binding to its coreceptor, GFRA4, leading to autophosphorylation and activation of the RET receptor. May be important in C-cell development and, in the postnatal development of the adrenal medulla. The protein is GDNF family receptor alpha-4 (Gfra4) of Mus musculus (Mouse).